The following is a 222-amino-acid chain: Ktr system potassium uptake protein A (222 aa).

One can recognise an RCK N-terminal domain in the interval 6 to 122 (NKQFAVIGLG…LEKIGADRII (117 aa)). Residues Arg16, 36 to 38 (DIN), 56 to 57 (NA), 78 to 80 (IGA), 103 to 105 (KAQ), His109, and Glu125 each bind NAD(+). Residues 139 to 222 (ENVLNYIDLS…DIKRFENEGM (84 aa)) form the RCK C-terminal domain.

The protein belongs to the KtrA potassium transport family. Homodimer, tetramer (dimer of homodimer) and octamer (tetramer of homodimer). Part of the KtrAB complex formed by an octameric catalytic ring of KtrA and a membrane associated dimer of KtrB forming a potassium channel.

It localises to the cell membrane. In terms of biological role, catalytic subunit of the KtrAB potassium uptake transporter. The 2 major potassium transporter complexes KtrAB and KtrCD confer resistance to both suddenly imposed and prolonged osmotic stress. The chain is Ktr system potassium uptake protein A (ktrA) from Bacillus subtilis (strain 168).